The primary structure comprises 344 residues: MKILGIETSCDETGVAIYDEDKGLVANQLYSQIEMHADYGGVVPELASRDHIRKTLPLIQEALKEANLTASDIDGVAYTAGPGLVGALLVGSTIARSLAYAWNVPALGVHHMEGHLLAPMLEENAPEFPFVALLVSGGHTQLVDVKNVGEYELLGESIDDAAGEAFDKTAKLLGLDYPGGAALAKLAESGTPNRFTFPRPMTDRPGLDFSFSGLKTFAANTINANLNEKGELEQQTRCDIAYAFQQAVIETLIIKCRRALQQTGYKRLVIAGGVSANKQLRHDLAELMKQIGGEVFYPRPQFCTDNGAMIAYAGFLRLKNGEQTDLSVSVKPRWPMVELCPIDV.

2 residues coordinate Fe cation: histidine 111 and histidine 115. Residues 134–138 (LVSGG), aspartate 167, glycine 180, and asparagine 277 each bind substrate. Aspartate 305 serves as a coordination point for Fe cation.

The protein belongs to the KAE1 / TsaD family. Fe(2+) serves as cofactor.

The protein localises to the cytoplasm. It carries out the reaction L-threonylcarbamoyladenylate + adenosine(37) in tRNA = N(6)-L-threonylcarbamoyladenosine(37) in tRNA + AMP + H(+). Its function is as follows. Required for the formation of a threonylcarbamoyl group on adenosine at position 37 (t(6)A37) in tRNAs that read codons beginning with adenine. Is involved in the transfer of the threonylcarbamoyl moiety of threonylcarbamoyl-AMP (TC-AMP) to the N6 group of A37, together with TsaE and TsaB. TsaD likely plays a direct catalytic role in this reaction. The polypeptide is tRNA N6-adenosine threonylcarbamoyltransferase (Glaesserella parasuis serovar 5 (strain SH0165) (Haemophilus parasuis)).